We begin with the raw amino-acid sequence, 226 residues long: Thymidylate kinase (226 aa).

16–23 (GIDGAGKT) contributes to the ATP binding site.

Belongs to the thymidylate kinase family.

It carries out the reaction dTMP + ATP = dTDP + ADP. Its function is as follows. Phosphorylation of dTMP to form dTDP in both de novo and salvage pathways of dTTP synthesis. This is Thymidylate kinase from Xanthomonas euvesicatoria pv. vesicatoria (strain 85-10) (Xanthomonas campestris pv. vesicatoria).